Here is a 491-residue protein sequence, read N- to C-terminus: Cobyric acid synthase (491 aa).

In terms of domain architecture, GATase cobBQ-type spans 253–429; the sequence is ARRVAVIRLP…WHGALEGDEL (177 aa). The active-site Nucleophile is C334. The active site involves H421.

This sequence belongs to the CobB/CobQ family. CobQ subfamily.

It participates in cofactor biosynthesis; adenosylcobalamin biosynthesis. Catalyzes amidations at positions B, D, E, and G on adenosylcobyrinic A,C-diamide. NH(2) groups are provided by glutamine, and one molecule of ATP is hydrogenolyzed for each amidation. This chain is Cobyric acid synthase, found in Mycolicibacterium gilvum (strain PYR-GCK) (Mycobacterium gilvum (strain PYR-GCK)).